A 266-amino-acid chain; its full sequence is Tropinone reductase homolog At1g07440 (266 aa).

An NADP(+)-binding site is contributed by 18-42 (LVTGGTKGIGHAIVEEFAGFGAVIH). Substrate is bound at residue Ser151. Tyr164 serves as the catalytic Proton acceptor.

Belongs to the short-chain dehydrogenases/reductases (SDR) family. SDR65C subfamily.

In Arabidopsis thaliana (Mouse-ear cress), this protein is Tropinone reductase homolog At1g07440.